The chain runs to 180 residues: Acireductone dioxygenase (180 aa).

Histidine 97, histidine 99, glutamate 103, and histidine 141 together coordinate Fe(2+). The Ni(2+) site is built by histidine 97, histidine 99, glutamate 103, and histidine 141.

This sequence belongs to the acireductone dioxygenase (ARD) family. Monomer. Fe(2+) serves as cofactor. Ni(2+) is required as a cofactor.

It carries out the reaction 1,2-dihydroxy-5-(methylsulfanyl)pent-1-en-3-one + O2 = 3-(methylsulfanyl)propanoate + CO + formate + 2 H(+). The catalysed reaction is 1,2-dihydroxy-5-(methylsulfanyl)pent-1-en-3-one + O2 = 4-methylsulfanyl-2-oxobutanoate + formate + 2 H(+). Its pathway is amino-acid biosynthesis; L-methionine biosynthesis via salvage pathway; L-methionine from S-methyl-5-thio-alpha-D-ribose 1-phosphate: step 5/6. Functionally, catalyzes 2 different reactions between oxygen and the acireductone 1,2-dihydroxy-3-keto-5-methylthiopentene (DHK-MTPene) depending upon the metal bound in the active site. Fe-containing acireductone dioxygenase (Fe-ARD) produces formate and 2-keto-4-methylthiobutyrate (KMTB), the alpha-ketoacid precursor of methionine in the methionine recycle pathway. Ni-containing acireductone dioxygenase (Ni-ARD) produces methylthiopropionate, carbon monoxide and formate, and does not lie on the methionine recycle pathway. In Yersinia pseudotuberculosis serotype O:3 (strain YPIII), this protein is Acireductone dioxygenase.